A 299-amino-acid chain; its full sequence is Putative beta-glucosidase 2 (299 aa).

A signal peptide spans 1-16; that stretch reads MLHCITTIFLSISRMT. Position 49–50 (49–50) interacts with a beta-D-glucoside; the sequence is NE. Catalysis depends on glutamate 50, which acts as the Proton donor. Cysteine 69 and cysteine 72 form a disulfide bridge. N-linked (GlcNAc...) asparagine glycosylation is found at asparagine 71 and asparagine 76. Tyrosine 189 lines the a beta-D-glucoside pocket. Asparagine 222 carries an N-linked (GlcNAc...) asparagine glycan. Glutamate 255 is a binding site for a beta-D-glucoside. Catalysis depends on glutamate 255, which acts as the Nucleophile. Asparagine 290 is a glycosylation site (N-linked (GlcNAc...) asparagine).

This sequence belongs to the glycosyl hydrolase 1 family.

It catalyses the reaction Hydrolysis of terminal, non-reducing beta-D-glucosyl residues with release of beta-D-glucose.. In Arabidopsis thaliana (Mouse-ear cress), this protein is Putative beta-glucosidase 2.